The following is a 359-amino-acid chain: 4-hydroxy-tetrahydrodipicolinate synthase, chloroplastic (359 aa).

The N-terminal 33 residues, 1 to 33, are a transit peptide targeting the chloroplast; the sequence is MSSSIIGRCHFVADSIEAAGTKRRTTRWRSPRA. A pyruvate-binding site is contributed by Thr102. The active-site Proton donor/acceptor is Tyr188. The active-site Schiff-base intermediate with substrate is the Lys216. Residue Ile255 coordinates pyruvate.

Belongs to the DapA family.

Its subcellular location is the plastid. The protein localises to the chloroplast. It carries out the reaction L-aspartate 4-semialdehyde + pyruvate = (2S,4S)-4-hydroxy-2,3,4,5-tetrahydrodipicolinate + H2O + H(+). Its pathway is amino-acid biosynthesis; L-lysine biosynthesis via DAP pathway; (S)-tetrahydrodipicolinate from L-aspartate: step 3/4. Its function is as follows. Catalyzes the condensation of (S)-aspartate-beta-semialdehyde [(S)-ASA] and pyruvate to 4-hydroxy-tetrahydrodipicolinate (HTPA). The sequence is that of 4-hydroxy-tetrahydrodipicolinate synthase, chloroplastic (DHPS1) from Nicotiana tabacum (Common tobacco).